The following is a 305-amino-acid chain: UDP-3-O-acyl-N-acetylglucosamine deacetylase (305 aa).

Zn(2+) is bound by residues His79, His238, and Asp242. The active-site Proton donor is His265.

The protein belongs to the LpxC family. The cofactor is Zn(2+).

The catalysed reaction is a UDP-3-O-[(3R)-3-hydroxyacyl]-N-acetyl-alpha-D-glucosamine + H2O = a UDP-3-O-[(3R)-3-hydroxyacyl]-alpha-D-glucosamine + acetate. It functions in the pathway glycolipid biosynthesis; lipid IV(A) biosynthesis; lipid IV(A) from (3R)-3-hydroxytetradecanoyl-[acyl-carrier-protein] and UDP-N-acetyl-alpha-D-glucosamine: step 2/6. Functionally, catalyzes the hydrolysis of UDP-3-O-myristoyl-N-acetylglucosamine to form UDP-3-O-myristoylglucosamine and acetate, the committed step in lipid A biosynthesis. The protein is UDP-3-O-acyl-N-acetylglucosamine deacetylase of Vibrio parahaemolyticus serotype O3:K6 (strain RIMD 2210633).